The sequence spans 209 residues: Protocatechuate 3,4-dioxygenase alpha chain (209 aa).

Arg142 contacts 3,4-dihydroxybenzoate.

The protein belongs to the intradiol ring-cleavage dioxygenase family. In terms of assembly, the enzyme is an oligomer of 12 copies of the alpha and beta chains. Fe(3+) is required as a cofactor.

The enzyme catalyses 3,4-dihydroxybenzoate + O2 = 3-carboxy-cis,cis-muconate + 2 H(+). Its pathway is aromatic compound metabolism; beta-ketoadipate pathway; 3-carboxy-cis,cis-muconate from 3,4-dihydroxybenzoate: step 1/1. In terms of biological role, plays an essential role in the utilization of numerous aromatic and hydroaromatic compounds via the beta-ketoadipate pathway. The sequence is that of Protocatechuate 3,4-dioxygenase alpha chain (pcaG) from Acinetobacter baylyi (strain ATCC 33305 / BD413 / ADP1).